Here is a 1386-residue protein sequence, read N- to C-terminus: Putative ATP-dependent RNA helicase DHX57 (1386 aa).

The segment covering 1-11 (MSSSVRRKGKP) has biased composition (basic residues). 2 disordered regions span residues 1-106 (MSSS…MTSE) and 120-147 (EQDA…NDER). 2 stretches are compositionally biased toward gly residues: residues 12-23 (GKGGGKGSSRGG) and 35-50 (GSGG…GGGN). Residues 101-125 (LHMTSENQEKVKALLRDLQEQDADA) adopt a coiled-coil conformation. Residues Ser-127 and Ser-132 each carry the phosphoserine modification. The segment covering 133 to 143 (GEEEDDEPDCC) has biased composition (acidic residues). Positions 180-220 (TVSPFAVQKLSRYGFNTERCQAVLRMCDGDVGASLEHLLTQ) constitute a UBA domain. The segment at 299 to 326 (ENSLEICKFYLKGNCKFGSKCRFKHEVP) adopts a C3H1-type zinc-finger fold. A phosphoserine mark is found at Ser-475, Ser-477, and Ser-480. Residues 554-721 (LNLLRKHQVV…FNSCPVITIP (168 aa)) enclose the Helicase ATP-binding domain. 567-574 (GMTGCGKT) serves as a coordination point for ATP. Residues 668–671 (DEVH) carry the DEVH box motif. The Helicase C-terminal domain occupies 830–1010 (LIEALLEWIV…QLCLRIKILE (181 aa)).

Belongs to the DEAD box helicase family. DEAH subfamily.

The enzyme catalyses ATP + H2O = ADP + phosphate + H(+). Its function is as follows. Probable ATP-binding RNA helicase. This is Putative ATP-dependent RNA helicase DHX57 (DHX57) from Homo sapiens (Human).